The chain runs to 240 residues: ATP-dependent dethiobiotin synthetase BioD (240 aa).

13–18 (EVGKTV) is an ATP binding site. Residue T17 coordinates Mg(2+). The active site involves K38. Position 42 (S42) interacts with substrate. Residues D55, 116 to 119 (EGAG), 176 to 177 (ND), and 205 to 207 (PWL) contribute to the ATP site. Mg(2+) is bound by residues D55 and E116.

Belongs to the dethiobiotin synthetase family. In terms of assembly, homodimer. Requires Mg(2+) as cofactor.

It localises to the cytoplasm. The enzyme catalyses (7R,8S)-7,8-diammoniononanoate + CO2 + ATP = (4R,5S)-dethiobiotin + ADP + phosphate + 3 H(+). It functions in the pathway cofactor biosynthesis; biotin biosynthesis; biotin from 7,8-diaminononanoate: step 1/2. Functionally, catalyzes a mechanistically unusual reaction, the ATP-dependent insertion of CO2 between the N7 and N8 nitrogen atoms of 7,8-diaminopelargonic acid (DAPA, also called 7,8-diammoniononanoate) to form a ureido ring. The chain is ATP-dependent dethiobiotin synthetase BioD from Pseudescherichia vulneris (Escherichia vulneris).